Reading from the N-terminus, the 1097-residue chain is DNA-directed RNA polymerase subunit beta (1097 aa).

A disordered region spans residues 1072–1097; that stretch reads QDINPRRNTPSRPTYESLGTSEYEED. The span at 1077–1091 shows a compositional bias: polar residues; that stretch reads RRNTPSRPTYESLGT.

This sequence belongs to the RNA polymerase beta chain family. In cyanobacteria the RNAP catalytic core is composed of 2 alpha, 1 beta, 1 beta', 1 gamma and 1 omega subunit. When a sigma factor is associated with the core the holoenzyme is formed, which can initiate transcription.

It catalyses the reaction RNA(n) + a ribonucleoside 5'-triphosphate = RNA(n+1) + diphosphate. In terms of biological role, DNA-dependent RNA polymerase catalyzes the transcription of DNA into RNA using the four ribonucleoside triphosphates as substrates. This chain is DNA-directed RNA polymerase subunit beta, found in Prochlorococcus marinus (strain MIT 9301).